The following is a 209-amino-acid chain: Large ribosomal subunit protein uL3 (209 aa).

The disordered stretch occupies residues 127–164 (NFSGGQRTHGQSDRLRAPGSVGGASDPSRTFKGTKMGG).

The protein belongs to the universal ribosomal protein uL3 family. As to quaternary structure, part of the 50S ribosomal subunit. Forms a cluster with proteins L14 and L19.

Its function is as follows. One of the primary rRNA binding proteins, it binds directly near the 3'-end of the 23S rRNA, where it nucleates assembly of the 50S subunit. In Chlorobium phaeobacteroides (strain BS1), this protein is Large ribosomal subunit protein uL3.